The primary structure comprises 466 residues: Ribosomal protein uS12 methylthiotransferase RimO (466 aa).

In terms of domain architecture, MTTase N-terminal spans 16–127 (PKVAFAHLGC…IVDVLQRVEA (112 aa)). 6 residues coordinate [4Fe-4S] cluster: C25, C61, C90, C165, C169, and C172. A Radical SAM core domain is found at 151–380 (TTDQAVAYLK…MALQQPIAAE (230 aa)). One can recognise a TRAM domain in the interval 383 to 454 (QRWVGKTVDV…IYDLTGHIVG (72 aa)).

The protein belongs to the methylthiotransferase family. RimO subfamily. The cofactor is [4Fe-4S] cluster.

It is found in the cytoplasm. It catalyses the reaction L-aspartate(89)-[ribosomal protein uS12]-hydrogen + (sulfur carrier)-SH + AH2 + 2 S-adenosyl-L-methionine = 3-methylsulfanyl-L-aspartate(89)-[ribosomal protein uS12]-hydrogen + (sulfur carrier)-H + 5'-deoxyadenosine + L-methionine + A + S-adenosyl-L-homocysteine + 2 H(+). Catalyzes the methylthiolation of an aspartic acid residue of ribosomal protein uS12. In Synechococcus sp. (strain CC9902), this protein is Ribosomal protein uS12 methylthiotransferase RimO.